We begin with the raw amino-acid sequence, 365 residues long: S-adenosylmethionine:tRNA ribosyltransferase-isomerase (365 aa).

It belongs to the QueA family. In terms of assembly, monomer.

It is found in the cytoplasm. It catalyses the reaction 7-aminomethyl-7-carbaguanosine(34) in tRNA + S-adenosyl-L-methionine = epoxyqueuosine(34) in tRNA + adenine + L-methionine + 2 H(+). It participates in tRNA modification; tRNA-queuosine biosynthesis. Its function is as follows. Transfers and isomerizes the ribose moiety from AdoMet to the 7-aminomethyl group of 7-deazaguanine (preQ1-tRNA) to give epoxyqueuosine (oQ-tRNA). The polypeptide is S-adenosylmethionine:tRNA ribosyltransferase-isomerase (Rickettsia peacockii (strain Rustic)).